Consider the following 1466-residue polypeptide: Collagen alpha-1(III) chain (1466 aa).

The signal sequence occupies residues 1–23 (MMSFVQKGSWLLLALLHPTIILA). A propeptide spans 24 to 153 (QQEAVEGGCS…CPTGPQNYSP (130 aa)) (N-terminal propeptide). Residues 30–89 (GGCSHLGQSYADRDVWKPEPCQICVCDSGSVLCDDIICDDQELDCPNPEIPFGECCAVCP) form the VWFC domain. The tract at residues 95-1194 (PTRPPNGQGP…GPPGPPGAPG (1100 aa)) is disordered. The segment covering 99–108 (PNGQGPQGPK) has biased composition (low complexity). Residues 146 to 155 (TGPQNYSPQY) are compositionally biased toward polar residues. Positions 149–167 (QNYSPQYDSYDVKSGVAVG) are nonhelical region (N-terminal). The triple-helical region stretch occupies residues 168 to 1196 (GLAGYPGPAG…PGPPGAPGPC (1029 aa)). 4-hydroxyproline is present on residues Pro173, Pro179, Pro182, Pro185, Pro191, Pro194, Pro197, Pro203, Pro206, Pro215, Pro218, Pro236, Pro239, Pro245, Pro248, Pro257, and Pro260. A compositionally biased stretch (pro residues) spans 175-185 (PAGPPGPPGPP). The segment covering 187 to 199 (TSGHPGSPGSPGY) has biased composition (low complexity). Residues 229-241 (KDGESGRPGRPGE) show a composition bias toward basic and acidic residues. Positions 251 to 260 (KGPAGIPGFP) are enriched in low complexity. Lys263 carries the 5-hydroxylysine; alternate modification. O-linked (Gal...) hydroxylysine; alternate glycosylation is present at Lys263. The segment covering 266 to 277 (RGFDGRNGEKGE) has biased composition (basic and acidic residues). Pro281 bears the 4-hydroxyproline mark. Lys284 carries the post-translational modification 5-hydroxylysine. 4-hydroxyproline occurs at positions 290, 296, 305, 311, 314, 332, 335, 338, 344, 347, 359, 365, 371, 383, 386, 392, 404, 407, 416, 425, 434, 443, 455, 458, 470, 473, 479, 488, 500, 512, 524, 530, 533, 539, 542, 545, 551, 554, 563, 566, 575, 581, 590, 599, 602, 608, 620, 635, 644, 650, 656, 659, 661, 668, 671, 680, 686, 692, 701, 703, 713, 716, 722, 728, 737, 746, 749, 755, 770, 776, 785, 788, 797, 806, 812, 815, 821, 830, 839, 845, and 854. Residues 311 to 322 (PGLPGAAGARGN) are compositionally biased toward low complexity. Residues 355–380 (PAGSPGSNGAPGQRGEPGPQGHAGAQ) are compositionally biased toward low complexity. Residues 390–399 (GSPGGKGEMG) show a composition bias toward gly residues. Residues 404 to 425 (PGAPGLMGARGPPGPAGANGAP) show a composition bias toward low complexity. Over residues 426-435 (GLRGGAGEPG) the composition is skewed to gly residues. Positions 478-523 (LPGAAGERGAPGFRGPAGPNGIPGEKGPAGERGAPGPAGPRGAAGE) are enriched in low complexity. A compositionally biased stretch (gly residues) spans 528 to 549 (GVPGGPGMRGMPGSPGGPGSDG). Gly residues predominate over residues 642 to 651 (GLPGTGGPPG). Gly residues predominate over residues 669-678 (GAPGGKGDAG). A compositionally biased stretch (low complexity) spans 679 to 692 (APGERGPPGLAGAP). Residues 693-711 (GLRGGAGPPGPEGGKGAAG) are compositionally biased toward gly residues. Positions 729–738 (GERGGLGSPG) are enriched in gly residues. Residues 787-796 (LPGIAGPRGS) show a composition bias toward low complexity. The segment covering 823–835 (GKGERGAPGEKGE) has biased composition (basic and acidic residues). Residues 836 to 850 (GGPPGVAGPPGGSGP) are compositionally biased toward gly residues. 5-hydroxylysine is present on Lys860. Residues 864–873 (GSPGGPGAAG) are compositionally biased toward gly residues. 4-hydroxyproline occurs at positions 866, 869, 875, 881, 884, 890, 892, 899, 905, 914, 917, 929, 935, 941, and 944. The span at 890 to 907 (PGPPGPSGSPGKDGPPGP) shows a compositional bias: pro residues. Residues 908 to 917 (AGNTGAPGSP) show a composition bias toward low complexity. Residues 946–961 (PLGIAGITGARGLAGP) show a composition bias toward low complexity. 4-hydroxyproline occurs at positions 962, 965, and 971. Lys977 carries the post-translational modification 5-hydroxylysine. 4-hydroxyproline is present on residues Pro983, Pro995, Pro1001, Pro1010, Pro1016, Pro1022, Pro1028, Pro1040, Pro1043, Pro1046, Pro1049, Pro1052, Pro1076, and Pro1085. The segment covering 1046 to 1055 (PGHPGPPGPV) has biased composition (pro residues). The segment covering 1067-1085 (SGPAGPAGAPGPAGSRGAP) has biased composition (low complexity). Residue Lys1106 is modified to 5-hydroxylysine. 14 positions are modified to 4-hydroxyproline: Pro1112, Pro1115, Pro1118, Pro1121, Pro1133, Pro1148, Pro1157, Pro1163, Pro1178, Pro1181, Pro1184, Pro1187, Pro1190, and Pro1193. Residues 1123–1133 (PAGQQGAIGSP) are compositionally biased toward low complexity. The segment covering 1181–1193 (PGQPGPPGPPGAP) has biased composition (pro residues). Residues 1197–1205 (CGGVGAAAI) form a nonhelical region (C-terminal) region. Residues 1222-1466 (DEPMDFKINT…GVDVGPVCFL (245 aa)) constitute a propeptide, C-terminal propeptide. The Fibrillar collagen NC1 domain maps to 1232 to 1466 (DEIMTSLKSV…GVDVGPVCFL (235 aa)). Disulfide bonds link Cys1262-Cys1294, Cys1302-Cys1464, and Cys1372-Cys1417. Positions 1280, 1282, 1283, 1285, and 1288 each coordinate Ca(2+).

It belongs to the fibrillar collagen family. As to quaternary structure, trimers of identical alpha 1(III) chains. The chains are linked to each other by interchain disulfide bonds. Trimers are also cross-linked via hydroxylysines. Interacts with ADGRG1. Post-translationally, proline residues at the third position of the tripeptide repeating unit (G-X-Y) are hydroxylated in some or all of the chains. In terms of processing, O-linked glycan consists of a Glc-Gal disaccharide bound to the oxygen atom of a post-translationally added hydroxyl group.

The protein resides in the secreted. Its subcellular location is the extracellular space. It is found in the extracellular matrix. Its function is as follows. Collagen type III occurs in most soft connective tissues along with type I collagen. Involved in regulation of cortical development. Is the major ligand of ADGRG1 in the developing brain and binding to ADGRG1 inhibits neuronal migration and activates the RhoA pathway by coupling ADGRG1 to GNA13 and possibly GNA12. This is Collagen alpha-1(III) chain (COL3A1) from Homo sapiens (Human).